Consider the following 599-residue polypeptide: Kelch repeat and BTB domain-containing protein 8 (599 aa).

The tract at residues 1-25 is disordered; the sequence is MAASADLSKSSPTPNGIPSSDTAND. A compositionally biased stretch (polar residues) spans 7–25; it reads LSKSSPTPNGIPSSDTAND. The BTB domain occupies 49-117; that stretch reads TDIVVEVDHG…AYTSRVILTE (69 aa). A BACK domain is found at 152–254; the sequence is SIGVFIFADH…MEDTFIEKIP (103 aa). Kelch repeat units lie at residues 334–388, 389–439, 441–479, 481–530, and 540–586; these read DIYI…YCCG, KMYA…EHKE, IYVLQGEFFLFYEPQKDYWGFLTPMTVPRIQGLAAVYKD, IYYI…LFQN, and QVTV…FECA.

This sequence belongs to the KBTBD8 family. Component of the BCR(KBTBD8) E3 ubiquitin ligase complex, at least composed of CUL3, KBTBD8 and RBX1.

The protein resides in the cytoplasm. It is found in the cytoskeleton. The protein localises to the spindle. It localises to the golgi apparatus. Substrate-specific adapter of a BCR (BTB-CUL3-RBX1) E3 ubiquitin ligase complex that acts as a regulator of neural crest specification. The BCR(KBTBD8) complex acts by mediating monoubiquitination of NOLC1 and TCOF1: monoubiquitination promotes the formation of a NOLC1-TCOF1 complex that acts as a platform to connect RNA polymerase I with enzymes responsible for ribosomal processing and modification, leading to remodel the translational program of differentiating cells in favor of neural crest specification. In Mus musculus (Mouse), this protein is Kelch repeat and BTB domain-containing protein 8 (Kbtbd8).